Reading from the N-terminus, the 424-residue chain is MTSRNEALFSRAQRSIPGGVNSPVRAFRSVGGTPRFIERAEGARVWDADGKAYIDYVGSWGPAIAGHSHPAIVEAVREAALRGLSFGAPTESEVEMAELLCALLPSIEMLRLVSSGTEATMSAIRLARGFTGRDDIIKFEGCYHGHADSLLVKAGSGLLTFGNPSSGGVPADFAHHTVVLDYNDLDQVETVFKARGDQIAAVIVEPVAGNMNLIKPRPGFLEGLRRLCTEYGAVLIFDEVMTGFRVGPQGVQGLYGITPDLTTLGKVIGGGMPVGAFGGRRDIMNCIAPLGPVYQAGTLSGSPVAVAAGLASLRLTQAPGFYDALAARARSLVDGLSGVAREAGVPFSADSIGGMFGIYFSPSVPASFAEVMASDREAFNRFFHAMLDAGHYFAPSAFEAGFVSAAHGEADIQATVAAARACLR.

Residue lysine 266 is modified to N6-(pyridoxal phosphate)lysine.

The protein belongs to the class-III pyridoxal-phosphate-dependent aminotransferase family. HemL subfamily. As to quaternary structure, homodimer. The cofactor is pyridoxal 5'-phosphate.

The protein resides in the cytoplasm. It catalyses the reaction (S)-4-amino-5-oxopentanoate = 5-aminolevulinate. It functions in the pathway porphyrin-containing compound metabolism; protoporphyrin-IX biosynthesis; 5-aminolevulinate from L-glutamyl-tRNA(Glu): step 2/2. This Azoarcus sp. (strain BH72) protein is Glutamate-1-semialdehyde 2,1-aminomutase.